The chain runs to 732 residues: Ribosomal RNA large subunit methyltransferase K/L (732 aa).

The region spanning 50–162 (MAYRICLWSR…RGRLLLGLDL (113 aa)) is the THUMP domain. Residues 396–424 (TERETSSEGDEPQGASGATSRPGPRNDGA) form a disordered region.

Belongs to the methyltransferase superfamily. RlmKL family.

The protein localises to the cytoplasm. The enzyme catalyses guanosine(2445) in 23S rRNA + S-adenosyl-L-methionine = N(2)-methylguanosine(2445) in 23S rRNA + S-adenosyl-L-homocysteine + H(+). It carries out the reaction guanosine(2069) in 23S rRNA + S-adenosyl-L-methionine = N(2)-methylguanosine(2069) in 23S rRNA + S-adenosyl-L-homocysteine + H(+). Specifically methylates the guanine in position 2445 (m2G2445) and the guanine in position 2069 (m7G2069) of 23S rRNA. This is Ribosomal RNA large subunit methyltransferase K/L from Chromohalobacter salexigens (strain ATCC BAA-138 / DSM 3043 / CIP 106854 / NCIMB 13768 / 1H11).